We begin with the raw amino-acid sequence, 106 residues long: MVNVPKTRKTYCKGKQCKKHTQHKVTQYKAGKASLYSQGKRRYDRKQSGYGGQTKPVFHKKAKTTKKVVLRLECVACKTKLQLSLKRCKHFELGGDKKQKGAALQF.

The tract at residues 37–56 (SQGKRRYDRKQSGYGGQTKP) is disordered.

It belongs to the eukaryotic ribosomal protein eL42 family.

In Pichia kudriavzevii (Yeast), this protein is Large ribosomal subunit protein eL42 (RPL44).